The chain runs to 346 residues: MSSSKVAVVTGTNSNLGLNIVYRLIERSEPEDNLTIVVTSRTLPRVRECIDLIKAFVNTINRTGSVDYDYLLVDFTNMISILDAHYSLSKRYDHINYFFVNAAQGVYSGIDWLGAVKEVFSSPLEAVTNPTYKIQRVGVKSKDGMGLVFQANVFGPYYLIQKLLPLLQAGQGTVVWVSSIMSAPKYLSLQDIQLLESDVSYEGSKRLVDLLHSATYKEMKKLGIRQYLTHPGIFTSLSFFQYLNVFTYYGMLFLFYLARWIGSPWHNIQGYKAANAPVYVATMANPHFEKEQMKYGSATFRDGLEYIKTDEVDTTGCEDVYKYISNLKLQWDEKLKDQIKPTRIPL.

Residues L16, T39, and R45 each coordinate NADP(+). Active-site proton donor residues include S178 and Y201. NADP(+) contacts are provided by Y201, K205, and S236. K205 serves as the catalytic Lowers pKa of active site Tyr.

This sequence belongs to the short-chain dehydrogenases/reductases (SDR) family. ERG27 subfamily.

The catalysed reaction is a 3beta-hydroxysteroid + NADP(+) = a 3-oxosteroid + NADPH + H(+). It participates in steroid biosynthesis; zymosterol biosynthesis; zymosterol from lanosterol: step 5/6. Functionally, responsible for the reduction of the keto group on the C-3 of sterols. In Kluyveromyces lactis (strain ATCC 8585 / CBS 2359 / DSM 70799 / NBRC 1267 / NRRL Y-1140 / WM37) (Yeast), this protein is 3-keto-steroid reductase (ERG27).